The sequence spans 181 residues: Large ribosomal subunit protein uL6 (181 aa).

The protein belongs to the universal ribosomal protein uL6 family. In terms of assembly, part of the 50S ribosomal subunit.

In terms of biological role, this protein binds to the 23S rRNA, and is important in its secondary structure. It is located near the subunit interface in the base of the L7/L12 stalk, and near the tRNA binding site of the peptidyltransferase center. This chain is Large ribosomal subunit protein uL6, found in Synechococcus sp. (strain JA-2-3B'a(2-13)) (Cyanobacteria bacterium Yellowstone B-Prime).